The chain runs to 621 residues: 1-deoxy-D-xylulose-5-phosphate synthase (621 aa).

Thiamine diphosphate is bound by residues histidine 80 and 121-123 (GHS). Aspartate 152 contacts Mg(2+). Residues 153 to 154 (GA), asparagine 181, tyrosine 288, and glutamate 370 each bind thiamine diphosphate. Residue asparagine 181 participates in Mg(2+) binding.

The protein belongs to the transketolase family. DXPS subfamily. In terms of assembly, homodimer. Requires Mg(2+) as cofactor. The cofactor is thiamine diphosphate.

The catalysed reaction is D-glyceraldehyde 3-phosphate + pyruvate + H(+) = 1-deoxy-D-xylulose 5-phosphate + CO2. It participates in metabolic intermediate biosynthesis; 1-deoxy-D-xylulose 5-phosphate biosynthesis; 1-deoxy-D-xylulose 5-phosphate from D-glyceraldehyde 3-phosphate and pyruvate: step 1/1. Its function is as follows. Catalyzes the acyloin condensation reaction between C atoms 2 and 3 of pyruvate and glyceraldehyde 3-phosphate to yield 1-deoxy-D-xylulose-5-phosphate (DXP). The polypeptide is 1-deoxy-D-xylulose-5-phosphate synthase (Pseudoalteromonas atlantica (strain T6c / ATCC BAA-1087)).